Here is a 927-residue protein sequence, read N- to C-terminus: Perchlorate reductase subunit alpha (927 aa).

Residues 1-31 (MVQMTRRGFLLASGATLLGSSLSFRTLAAAA) constitute a signal peptide (tat-type signal). The 4Fe-4S Mo/W bis-MGD-type domain maps to 53-116 (DKKTRGAHLI…CAHDYMYGPH (64 aa)). [4Fe-4S] cluster is bound by residues histidine 60, cysteine 64, cysteine 68, and cysteine 102. Residue aspartate 198 coordinates Mo-bis(molybdopterin guanine dinucleotide).

This sequence belongs to the prokaryotic molybdopterin-containing oxidoreductase family. In terms of assembly, heterotrimer of alpha, beta and gamma subunits. The cofactor is [4Fe-4S] cluster. Requires Mo-bis(molybdopterin guanine dinucleotide) as cofactor. Post-translationally, predicted to be exported by the Tat system. The position of the signal peptide cleavage has not been experimentally proven.

The protein localises to the periplasm. Functionally, component of the perchlorate reductase that catalyzes the reduction of perchlorate to chlorite and allows anaerobic growth on perchlorate as the sole electron acceptor. Is probably also able to reduce chlorate to chlorite. The alpha subunit is likely the catalytic subunit. The protein is Perchlorate reductase subunit alpha (pcrA) of Dechloromonas aromatica (strain RCB).